We begin with the raw amino-acid sequence, 469 residues long: MNPNQKIITIGSICMVVGIISLILQIGNIISIWVSHSIQTGNQNHPETCNQSIITYENNTWVNQTYVNISNTNVVAGQDATSVILTGNSSLCPISGWAIYSKDNGIRIGSKGDVFVIREPFISCSHLECRTFFLTQGALLNDKHSNGTVKDRSPYRTLMSCPVGEAPSPYNSRFESVAWSASACHDGMGWLTIGISGPDNGAVAVLKYNGIITDTIKSWRNNILRTQESECACVNGSCFTIMTDGPSNGQASYKILKIEKGKVTKSIELNAPNYHYEECSCYPDTGKVMCVCRDNWHGSNRPWVSFDQNLDYQIGYICSGVFGDNPRPNDGTGSCGPVSSNGANGIKGFSFRYDNGVWIGRTKSTSSRSGFEMIWDPNGWTETDSSFSVRQDIVAITDWSGYSGSFVQHPELTGLDCMRPCFWVELIRGQPKENTIWTSGSSISFCGVNSDTVGWSWPDGAELPFSIDK.

Residues 1 to 6 lie on the Intravirion side of the membrane; the sequence is MNPNQK. A helical membrane pass occupies residues 7 to 27; the sequence is IITIGSICMVVGIISLILQIG. An involved in apical transport and lipid raft association region spans residues 11-33; it reads GSICMVVGIISLILQIGNIISIW. Over 28–469 the chain is Virion surface; it reads NIISIWVSHS…GAELPFSIDK (442 aa). The tract at residues 36–90 is hypervariable stalk region; that stretch reads HSIQTGNQNHPETCNQSIITYENNTWVNQTYVNISNTNVVAGQDATSVILTGNSS. N-linked (GlcNAc...) asparagine; by host glycans are attached at residues N50, N58, N63, N68, and N88. A head of neuraminidase region spans residues 91–469; sequence LCPISGWAIY…GAELPFSIDK (379 aa). 8 disulfides stabilise this stretch: C92/C417, C124/C129, C184/C231, C233/C238, C279/C292, C281/C290, C318/C335, and C421/C446. R118 is a binding site for substrate. N-linked (GlcNAc...) asparagine; by host glycosylation occurs at N146. The Proton donor/acceptor role is filled by D151. R152 contributes to the substrate binding site. Residue N235 is glycosylated (N-linked (GlcNAc...) asparagine; by host). 277–278 is a substrate binding site; that stretch reads EE. R293 contacts substrate. Positions 294, 298, 324, and 344 each coordinate Ca(2+). R368 is a binding site for substrate. Y402 acts as the Nucleophile in catalysis.

Belongs to the glycosyl hydrolase 34 family. Homotetramer. Ca(2+) serves as cofactor. N-glycosylated.

The protein resides in the virion membrane. The protein localises to the host apical cell membrane. The enzyme catalyses Hydrolysis of alpha-(2-&gt;3)-, alpha-(2-&gt;6)-, alpha-(2-&gt;8)- glycosidic linkages of terminal sialic acid residues in oligosaccharides, glycoproteins, glycolipids, colominic acid and synthetic substrates.. Its activity is regulated as follows. Inhibited by the neuraminidase inhibitors zanamivir (Relenza) and oseltamivir (Tamiflu). These drugs interfere with the release of progeny virus from infected cells and are effective against all influenza strains. Resistance to neuraminidase inhibitors is quite rare. Functionally, catalyzes the removal of terminal sialic acid residues from viral and cellular glycoconjugates. Cleaves off the terminal sialic acids on the glycosylated HA during virus budding to facilitate virus release. Additionally helps virus spread through the circulation by further removing sialic acids from the cell surface. These cleavages prevent self-aggregation and ensure the efficient spread of the progeny virus from cell to cell. Otherwise, infection would be limited to one round of replication. Described as a receptor-destroying enzyme because it cleaves a terminal sialic acid from the cellular receptors. May facilitate viral invasion of the upper airways by cleaving the sialic acid moieties on the mucin of the airway epithelial cells. Likely to plays a role in the budding process through its association with lipid rafts during intracellular transport. May additionally display a raft-association independent effect on budding. Plays a role in the determination of host range restriction on replication and virulence. Sialidase activity in late endosome/lysosome traffic seems to enhance virus replication. The chain is Neuraminidase from Aves (Human).